The chain runs to 545 residues: ATP synthase subunit alpha (545 aa).

173 to 180 contributes to the ATP binding site; the sequence is GDRQTGKT.

The protein belongs to the ATPase alpha/beta chains family. In terms of assembly, F-type ATPases have 2 components, CF(1) - the catalytic core - and CF(0) - the membrane proton channel. CF(1) has five subunits: alpha(3), beta(3), gamma(1), delta(1), epsilon(1). CF(0) has three main subunits: a(1), b(2) and c(9-12). The alpha and beta chains form an alternating ring which encloses part of the gamma chain. CF(1) is attached to CF(0) by a central stalk formed by the gamma and epsilon chains, while a peripheral stalk is formed by the delta and b chains.

Its subcellular location is the cell membrane. The catalysed reaction is ATP + H2O + 4 H(+)(in) = ADP + phosphate + 5 H(+)(out). Its function is as follows. Produces ATP from ADP in the presence of a proton gradient across the membrane. The alpha chain is a regulatory subunit. This chain is ATP synthase subunit alpha, found in Clavibacter michiganensis subsp. michiganensis (strain NCPPB 382).